The chain runs to 225 residues: O-methyltransferase rstn1 (225 aa).

The S-adenosyl-L-methionine site is built by glutamine 97 and histidine 142.

This sequence belongs to the methyltransferase superfamily.

The enzyme catalyses desmethylrestrictinol + S-adenosyl-L-methionine = restrictinol + S-adenosyl-L-homocysteine + H(+). Its pathway is antifungal biosynthesis. O-methyltransferase; part of the gene cluster that mediates the biosynthesis of the tetrahydropyranyl antifungal agent restricticin that acts as an inhibitor of CYP51 and blocks the ergosterol biosynthesis. Within the pathway, rstn1 uses S-adenosylmethionine to methylate position C4 of desmethylrestrictinol to produce restrictinol. The highly reducing polyketide synthase rstn3, the short chain dehydrogenase rstn4, the cyclase rstn5, the FAD-dependent monooxygenase rstn6 and the enoylreductase rstn7 are required to generate the first stable intermediate desmethylrestrictinol. Rstn3 with rstn7 biosynthesize the first polyketide chain intermediate that is reduced by rstn4, followed by epoxidation by rstn6 before 6-endo cyclization via epoxide opening by rstn5 leads to desmethylrestrictinol. The methyltransferase rstn1 then catalyzes the C4 O-methylation of desmethylrestrictinol to produce restrictinol, and the nonribosomal peptide synthetase rstn8 catalyzes the C3 esterification of restrictinol with glycine that leads to restricticin. The polypeptide is O-methyltransferase rstn1 (Aspergillus nomiae NRRL (strain ATCC 15546 / NRRL 13137 / CBS 260.88 / M93)).